The following is a 406-amino-acid chain: Tryptophan synthase beta chain (406 aa).

Lys99 carries the post-translational modification N6-(pyridoxal phosphate)lysine.

The protein belongs to the TrpB family. As to quaternary structure, tetramer of two alpha and two beta chains. Requires pyridoxal 5'-phosphate as cofactor.

The enzyme catalyses (1S,2R)-1-C-(indol-3-yl)glycerol 3-phosphate + L-serine = D-glyceraldehyde 3-phosphate + L-tryptophan + H2O. The protein operates within amino-acid biosynthesis; L-tryptophan biosynthesis; L-tryptophan from chorismate: step 5/5. In terms of biological role, the beta subunit is responsible for the synthesis of L-tryptophan from indole and L-serine. The polypeptide is Tryptophan synthase beta chain (Brucella canis (strain ATCC 23365 / NCTC 10854 / RM-666)).